A 1178-amino-acid polypeptide reads, in one-letter code: Phytochrome B (1178 aa).

Over residues 1-15 (MASGSRATPTRSPSS) the composition is skewed to polar residues. The segment at 1-58 (MASGSRATPTRSPSSARPEAPRHAHHHHHHHSQSSGGSTSRAGGGGGGGGGGGGTAAT) is disordered. The segment covering 23–32 (HAHHHHHHHS) has biased composition (basic residues). Positions 42–55 (AGGGGGGGGGGGGT) are enriched in gly residues. The GAF domain occupies 267-449 (DIKLLCDTVV…AFGLQLNMEL (183 aa)). Cys372 is a binding site for phytochromobilin. 2 consecutive PAS domains span residues 668–739 (VARE…LRGE) and 802–873 (DYKA…MVVI). The 221-residue stretch at 950 to 1170 (YICQEIKNPL…LIVLELPQPR (221 aa)) folds into the Histidine kinase domain.

This sequence belongs to the phytochrome family. Homodimer. In terms of processing, contains one covalently linked phytochromobilin chromophore.

Regulatory photoreceptor which exists in two forms that are reversibly interconvertible by light: the Pr form that absorbs maximally in the red region of the spectrum and the Pfr form that absorbs maximally in the far-red region. Photoconversion of Pr to Pfr induces an array of morphogenic responses, whereas reconversion of Pfr to Pr cancels the induction of those responses. Pfr controls the expression of a number of nuclear genes including those encoding the small subunit of ribulose-bisphosphate carboxylase, chlorophyll A/B binding protein, protochlorophyllide reductase, rRNA, etc. It also controls the expression of its own gene(s) in a negative feedback fashion. The polypeptide is Phytochrome B (PHYB) (Sorghum bicolor (Sorghum)).